Here is a 236-residue protein sequence, read N- to C-terminus: Purine nucleoside phosphorylase DeoD-type (236 aa).

H5 is a binding site for a purine D-ribonucleoside. Residues G21, R25, R44, and R88–S91 each bind phosphate. Residues E180 to E182 and S204 to D205 contribute to the a purine D-ribonucleoside site. The Proton donor role is filled by D205.

The protein belongs to the PNP/UDP phosphorylase family. Homohexamer; trimer of homodimers.

The enzyme catalyses a purine D-ribonucleoside + phosphate = a purine nucleobase + alpha-D-ribose 1-phosphate. It catalyses the reaction a purine 2'-deoxy-D-ribonucleoside + phosphate = a purine nucleobase + 2-deoxy-alpha-D-ribose 1-phosphate. Its function is as follows. Catalyzes the reversible phosphorolytic breakdown of the N-glycosidic bond in the beta-(deoxy)ribonucleoside molecules, with the formation of the corresponding free purine bases and pentose-1-phosphate. This Hahella chejuensis (strain KCTC 2396) protein is Purine nucleoside phosphorylase DeoD-type.